The chain runs to 613 residues: Leucine-rich repeat receptor-like protein FASCIATED EAR2 (613 aa).

Residues 1 to 28 form the signal peptide; sequence MLTATPLPHQLLATFLLVLASATQPAVP. Residues 29-573 are Extracellular-facing; that stretch reads ASTDRAALLA…WLGGWHGENG (545 aa). 17 LRR repeats span residues 79–103, 104–128, 130–150, 151–176, 178–199, 202–226, 227–250, 251–274, 276–297, 298–322, 324–346, 347–370, 372–394, 435–459, 460–483, 484–507, and 508–531; these read TPSV…PLAL, LRRL…LPRS, LALD…LPSS, LPAL…SFPA, LAAL…IVAD, NSAL…IAAV, RSLQ…IGNL, TYLQ…LAGC, QLLY…ELDA, LASL…LAGC, SLEV…VAKW, LSLK…MFSF, LLQW…GFNV, VQAT…LVDM, KGLE…LGGM, GRLH…IAAM, and TVLE…KFPG. N-linked (GlcNAc...) asparagine glycosylation occurs at Asn-91. The N-linked (GlcNAc...) asparagine glycan is linked to Asn-158. Asn-249 carries an N-linked (GlcNAc...) asparagine glycan. A glycan (N-linked (GlcNAc...) asparagine) is linked at Asn-393. A glycan (N-linked (GlcNAc...) asparagine) is linked at Asn-466. The N-linked (GlcNAc...) asparagine glycan is linked to Asn-514. Residues 574 to 597 form a helical membrane-spanning segment; it reads WVSLGAFCISTMTSFYVSLATLLC. Topologically, residues 598 to 613 are cytoplasmic; the sequence is SSNARNFVFRPVRVEY.

As to expression, expressed in ear primordia, vegetative apex and young leaf tissues. Barely detected in expanded leaf tissues and not expressed in roots.

Its subcellular location is the cell membrane. In terms of biological role, receptor-like protein that regulates shoot meristem proliferation. Based on additive and synergistic phenotypes of double mutants, it is probable that unlike CLV1 and CLV2 in A.thaliana, FAE2 and TD1 do not function exclusively in a single pathway. The sequence is that of Leucine-rich repeat receptor-like protein FASCIATED EAR2 (FEA2) from Zea mays (Maize).